Reading from the N-terminus, the 217-residue chain is MRLRHKPYAMDRIKEYSQFVIGNPEEHRGNWKELFGNDHPIHIEVGTGRGRFVYEMAKANPDINYIGIEKFTSVIVDALDKLIEKELPNLKLINKDAEDLTVFFTKGEIDRVYLNFSDPWPKKRHAKRRLTYKTFLRNYEEVLVKDGEIHFKTDNQALFEYSLMSMAEYGMVFTFLSLDLHNSDFEGNIMTEYEEKFSSKGHRIYRVEAKYRTEPVQ.

Positions 44, 69, 96, and 118 each coordinate S-adenosyl-L-methionine. D118 is an active-site residue. Substrate-binding positions include K122, D154, and 191 to 194 (TEYE).

This sequence belongs to the class I-like SAM-binding methyltransferase superfamily. TrmB family.

The enzyme catalyses guanosine(46) in tRNA + S-adenosyl-L-methionine = N(7)-methylguanosine(46) in tRNA + S-adenosyl-L-homocysteine. It participates in tRNA modification; N(7)-methylguanine-tRNA biosynthesis. Its function is as follows. Catalyzes the formation of N(7)-methylguanine at position 46 (m7G46) in tRNA. This chain is tRNA (guanine-N(7)-)-methyltransferase, found in Bacillus cytotoxicus (strain DSM 22905 / CIP 110041 / 391-98 / NVH 391-98).